The chain runs to 172 residues: Iron-sulfur cluster assembly protein SufA (172 aa).

Positions 1-19 are cleaved as a signal peptide; that stretch reads MFINIFLFLFAATINISSS. [4Fe-4S] cluster is bound by residues Cys-96, Cys-164, and Cys-166.

It belongs to the HesB/IscA family. In terms of assembly, homodimer.

The protein localises to the plastid. It is found in the apicoplast. Its pathway is cofactor biosynthesis; iron-sulfur cluster biosynthesis. In terms of biological role, participates in the sulfur mobilization (SUF) pathway for iron-sulfur (Fe-S) cluster biogenesis. Involved in the pre-assembly of [4Fe-4S] clusters and their transfer to target proteins. The polypeptide is Iron-sulfur cluster assembly protein SufA (Plasmodium berghei (strain Anka)).